We begin with the raw amino-acid sequence, 353 residues long: Stachydrine N-demethylase reductase subunit Stc4 (353 aa).

An FAD-binding FR-type domain is found at 11–114 (SDAEPLECVT…IGPAGKFSIV (104 aa)). The 85-residue stretch at 269-353 (AEIAFALSGV…KPLRRVSVEA (85 aa)) folds into the 2Fe-2S ferredoxin-type domain. [2Fe-2S] cluster contacts are provided by Cys303, Cys308, Cys311, and Cys341.

In the N-terminal section; belongs to the FAD-binding oxidoreductase type 6 family. As to quaternary structure, the system is probably composed of an oxygenase subunit (Stc2) and two reductase subunits (Stc3 and Stc4). FAD serves as cofactor. [2Fe-2S] cluster is required as a cofactor.

Reductase involved in the catabolism of stachydrine (L-proline betaine), a source of carbon and nitrogen. Part of a Rieske-type oxygenase system that catalyzes the demethylation of stachydrine to produce N-methyl-L-proline (monomethylproline). This subunit is probably involved in the transfer of electrons from NAD(P)H to the catalytic subunit Stc2. The sequence is that of Stachydrine N-demethylase reductase subunit Stc4 from Rhizobium meliloti (strain 1021) (Ensifer meliloti).